A 446-amino-acid chain; its full sequence is Tubulin gamma chain (446 aa).

142 to 148 lines the GTP pocket; the sequence is AGGTGSG.

This sequence belongs to the tubulin family.

It is found in the cytoplasm. The protein localises to the cytoskeleton. The protein resides in the microtubule organizing center. It localises to the spindle pole body. Tubulin is the major constituent of microtubules. The gamma chain is found at microtubule organizing centers (MTOC) such as the spindle poles or the centrosome, suggesting that it is involved in the minus-end nucleation of microtubule assembly. The sequence is that of Tubulin gamma chain (tug1) from Schizosaccharomyces japonicus (Fission yeast).